Consider the following 314-residue polypeptide: 2,3-dihydroxyphenylpropionate/2,3-dihydroxicinnamic acid 1,2-dioxygenase (314 aa).

The active-site Proton donor is the His-115. His-179 functions as the Proton acceptor in the catalytic mechanism.

This sequence belongs to the LigB/MhpB extradiol dioxygenase family. Homotetramer. The cofactor is Fe(2+).

The enzyme catalyses 3-(2,3-dihydroxyphenyl)propanoate + O2 = (2Z,4E)-2-hydroxy-6-oxonona-2,4-dienedioate + H(+). It catalyses the reaction (2E)-3-(2,3-dihydroxyphenyl)prop-2-enoate + O2 = (2Z,4E,7E)-2-hydroxy-6-oxonona-2,4,7-trienedioate + H(+). It participates in aromatic compound metabolism; 3-phenylpropanoate degradation. Its function is as follows. Catalyzes the non-heme iron(II)-dependent oxidative cleavage of 2,3-dihydroxyphenylpropionic acid and 2,3-dihydroxicinnamic acid into 2-hydroxy-6-ketononadienedioate and 2-hydroxy-6-ketononatrienedioate, respectively. This Escherichia coli (strain 55989 / EAEC) protein is 2,3-dihydroxyphenylpropionate/2,3-dihydroxicinnamic acid 1,2-dioxygenase.